We begin with the raw amino-acid sequence, 431 residues long: Fumarylacetoacetase fahA (431 aa).

Asp-133 lines the Ca(2+) pocket. Tyr-135 provides a ligand contact to substrate. Residue His-140 is the Proton acceptor of the active site. Arg-149 serves as a coordination point for substrate. Residues Glu-209, Glu-211, and Asp-243 each contribute to the Ca(2+) site. Mg(2+) is bound at residue Asp-243. 2 residues coordinate substrate: Gln-250 and Tyr-254. Residues Lys-263 and Thr-267 each contribute to the Mg(2+) site. A substrate-binding site is contributed by Thr-362. Residues 362–381 are compositionally biased toward polar residues; sequence TISGKENQTQGSLLEQTNGK. A disordered region spans residues 362–382; sequence TISGKENQTQGSLLEQTNGKN.

Belongs to the FAH family. Ca(2+) serves as cofactor. It depends on Mg(2+) as a cofactor.

It catalyses the reaction 4-fumarylacetoacetate + H2O = acetoacetate + fumarate + H(+). The protein operates within amino-acid degradation; L-phenylalanine degradation; acetoacetate and fumarate from L-phenylalanine: step 6/6. In terms of biological role, fumarylacetoacetase; part of the L-tyrosine degradation gene cluster that mediates the biosynthesis of the brownish pigment pyomelanin as an alternative melanin. The 4-hydroxyphenylpyruvate dioxygenase hppD catalyzes the conversion of 4-hydroxyphenylpyruvate to homogentisic acid (HGA). The protein hmgX is crucial for this conversion and thus, probably functions as an accessory factor to mediate specific activity of hppD. The homogentisate 1,2-dioxygenase hmgA is then involved in the cleavage of the aromatic ring of HGA and its conversion to 4-maleylacetoacetate. When hmgA activity is lowered by the cell wall integrity (CWI) signaling pathway, HGA accumulates and leads to the production of pyomelanin through benzoquinone acetic acid after oxidation and polymerization. On the opposite, in non-stress conditions, both hppD and hmgA activities are balanced and HGA is degraded into 4-maleylacetoacetate. 4-maleylacetoacetate is further converted to 4-fumarylacetoacetate by the maleylacetoacetate isomerase maiA, which is degraded into fumarate and acetoacetate by the fumarylacetoacetase fahA. The sequence is that of Fumarylacetoacetase fahA from Aspergillus fumigatus (strain ATCC MYA-4609 / CBS 101355 / FGSC A1100 / Af293) (Neosartorya fumigata).